A 1051-amino-acid chain; its full sequence is Ubiquitin-activating enzyme E1 2 (1051 aa).

Residues 1–32 show a composition bias toward basic and acidic residues; sequence MLPRKREIVAGEVEDLQKKTRAGEGEATREEG. A disordered region spans residues 1-42; it reads MLPRKREIVAGEVEDLQKKTRAGEGEATREEGDAAMAGRGNE. 2 repeat units span residues 56–194 and 453–605. Residues 56–605 are 2 approximate repeats; that stretch reads GRETMKPLFG…GAKCNTQMVI (550 aa). Residues A472, D498, R509, K522, and 570–571 each bind ATP; that span reads DN. C626 functions as the Glycyl thioester intermediate in the catalytic mechanism.

This sequence belongs to the ubiquitin-activating E1 family. In terms of assembly, monomer.

It carries out the reaction ATP + ubiquitin + [E1 ubiquitin-activating enzyme]-L-cysteine = AMP + diphosphate + S-ubiquitinyl-[E1 ubiquitin-activating enzyme]-L-cysteine.. The protein operates within protein modification; protein ubiquitination. Functionally, activates ubiquitin by first adenylating its C-terminal glycine residue with ATP, and thereafter linking this residue to the side chain of a cysteine residue in E1, yielding a ubiquitin-E1 thioester and free AMP. This Triticum aestivum (Wheat) protein is Ubiquitin-activating enzyme E1 2 (UBA2).